The chain runs to 162 residues: Crossover junction endodeoxyribonuclease RuvC (162 aa).

Catalysis depends on residues aspartate 8, glutamate 69, and histidine 141. Residues aspartate 8, glutamate 69, and histidine 141 each contribute to the Mg(2+) site.

This sequence belongs to the RuvC family. In terms of assembly, homodimer which binds Holliday junction (HJ) DNA. The HJ becomes 2-fold symmetrical on binding to RuvC with unstacked arms; it has a different conformation from HJ DNA in complex with RuvA. In the full resolvosome a probable DNA-RuvA(4)-RuvB(12)-RuvC(2) complex forms which resolves the HJ. Mg(2+) serves as cofactor.

It is found in the cytoplasm. It carries out the reaction Endonucleolytic cleavage at a junction such as a reciprocal single-stranded crossover between two homologous DNA duplexes (Holliday junction).. The RuvA-RuvB-RuvC complex processes Holliday junction (HJ) DNA during genetic recombination and DNA repair. Endonuclease that resolves HJ intermediates. Cleaves cruciform DNA by making single-stranded nicks across the HJ at symmetrical positions within the homologous arms, yielding a 5'-phosphate and a 3'-hydroxyl group; requires a central core of homology in the junction. The consensus cleavage sequence is 5'-(A/T)TT(C/G)-3'. Cleavage occurs on the 3'-side of the TT dinucleotide at the point of strand exchange. HJ branch migration catalyzed by RuvA-RuvB allows RuvC to scan DNA until it finds its consensus sequence, where it cleaves and resolves the cruciform DNA. In Wolbachia sp. subsp. Drosophila simulans (strain wRi), this protein is Crossover junction endodeoxyribonuclease RuvC.